A 476-amino-acid polypeptide reads, in one-letter code: Trigger factor (476 aa).

The PPIase FKBP-type domain occupies 174–261 (GDIAVVSFKG…LKDLKEKELP (88 aa)). Residues 436 to 476 (KENTTKTSKTTKNSKTTKATKTTKTTKTTKTSKTQNKKEKK) are disordered. Positions 440 to 469 (TKTSKTTKNSKTTKATKTTKTTKTTKTSKT) are enriched in low complexity.

The protein belongs to the FKBP-type PPIase family. Tig subfamily.

Its subcellular location is the cytoplasm. It catalyses the reaction [protein]-peptidylproline (omega=180) = [protein]-peptidylproline (omega=0). Involved in protein export. Acts as a chaperone by maintaining the newly synthesized protein in an open conformation. Functions as a peptidyl-prolyl cis-trans isomerase. The chain is Trigger factor from Prochlorococcus marinus (strain MIT 9215).